The sequence spans 578 residues: Isocitrate dehydrogenase kinase/phosphatase (578 aa).

Residues 315–321 and Lys336 contribute to the ATP site; that span reads APGIRGM. Asp371 is a catalytic residue.

Belongs to the AceK family.

The protein resides in the cytoplasm. The enzyme catalyses L-seryl-[isocitrate dehydrogenase] + ATP = O-phospho-L-seryl-[isocitrate dehydrogenase] + ADP + H(+). In terms of biological role, bifunctional enzyme which can phosphorylate or dephosphorylate isocitrate dehydrogenase (IDH) on a specific serine residue. This is a regulatory mechanism which enables bacteria to bypass the Krebs cycle via the glyoxylate shunt in response to the source of carbon. When bacteria are grown on glucose, IDH is fully active and unphosphorylated, but when grown on acetate or ethanol, the activity of IDH declines drastically concomitant with its phosphorylation. The sequence is that of Isocitrate dehydrogenase kinase/phosphatase from Escherichia coli O157:H7.